The primary structure comprises 732 residues: Catalase-peroxidase (732 aa).

The disordered stretch occupies residues 1-26 (MDAKTDDQGGKCPFPHGGGSRGHRNR). A cross-link (tryptophyl-tyrosyl-methioninium (Trp-Tyr) (with M-245)) is located at residues 97–219 (WHSAGTYRTT…LGAVQMGLIY (123 aa)). Histidine 98 serves as the catalytic Proton acceptor. Residues 219-245 (YVNPEGPNGNPDPVAAAKDIRETFARM) constitute a cross-link (tryptophyl-tyrosyl-methioninium (Tyr-Met) (with W-97)). Histidine 260 is a binding site for heme b.

The protein belongs to the peroxidase family. Peroxidase/catalase subfamily. In terms of assembly, homodimer or homotetramer. Requires heme b as cofactor. Formation of the three residue Trp-Tyr-Met cross-link is important for the catalase, but not the peroxidase activity of the enzyme.

It catalyses the reaction H2O2 + AH2 = A + 2 H2O. The catalysed reaction is 2 H2O2 = O2 + 2 H2O. Its function is as follows. Bifunctional enzyme with both catalase and broad-spectrum peroxidase activity. The chain is Catalase-peroxidase from Rhodopseudomonas palustris (strain BisB5).